The following is a 320-amino-acid chain: Cytochrome f (320 aa).

The N-terminal stretch at 1-35 is a signal peptide; that stretch reads MQTRNAFSWLKKQITRSISVSLMIYILTRTSISSA. The heme site is built by Tyr-36, Cys-56, Cys-59, and His-60. A helical membrane pass occupies residues 286-306; it reads VQGLLFFLASVILAQIFLVLK.

Belongs to the cytochrome f family. As to quaternary structure, the 4 large subunits of the cytochrome b6-f complex are cytochrome b6, subunit IV (17 kDa polypeptide, petD), cytochrome f and the Rieske protein, while the 4 small subunits are PetG, PetL, PetM and PetN. The complex functions as a dimer. Heme serves as cofactor.

Its subcellular location is the plastid. It is found in the chloroplast thylakoid membrane. In terms of biological role, component of the cytochrome b6-f complex, which mediates electron transfer between photosystem II (PSII) and photosystem I (PSI), cyclic electron flow around PSI, and state transitions. This is Cytochrome f from Solanum bulbocastanum (Wild potato).